Here is a 1709-residue protein sequence, read N- to C-terminus: Sialoadhesin (1709 aa).

The N-terminal stretch at 1 to 19 is a signal peptide; it reads MGFLPKLLLLASFFPAGQA. The Ig-like V-type domain maps to 20–136; it reads SWGVSSPQDV…DVKGTLVTVT (117 aa). Over 20–1641 the chain is Extracellular; that stretch reads SWGVSSPQDV…ALHRLHQFQQ (1622 aa). Disulfide bonds link cysteine 36–cysteine 166, cysteine 41–cysteine 98, cysteine 160–cysteine 217, and cysteine 262–cysteine 305. N-acetylneuraminate-binding positions include tyrosine 63, arginine 116, and 122–126; that span reads VNRWS. 12 consecutive Ig-like C2-type domains span residues 139 to 233, 238 to 320, 326 to 405, 411 to 507, 511 to 593, 601 to 705, 708 to 785, 799 to 894, 898 to 977, 984 to 1083, 1085 to 1165, and 1176 to 1248; these read PRVP…IHLQ, PKGV…PPIS, AEVQ…GPVS, PPLT…LDFH, ARLL…AVLT, PTFT…ATFN, ATVL…AQLS, PKLS…FQVR, VQVS…APIS, PRHV…ADFD, QAVN…RPIT, and RLTY…SPLG. Residue asparagine 159 is glycosylated (N-linked (GlcNAc...) asparagine). 2 N-linked (GlcNAc...) asparagine glycosylation sites follow: asparagine 265 and asparagine 339. Cystine bridges form between cysteine 346–cysteine 390 and cysteine 433–cysteine 491. Asparagine 499 carries N-linked (GlcNAc...) asparagine glycosylation. 2 disulfides stabilise this stretch: cysteine 531–cysteine 575 and cysteine 624–cysteine 689. Asparagine 697, asparagine 726, asparagine 730, and asparagine 741 each carry an N-linked (GlcNAc...) asparagine glycan. 2 cysteine pairs are disulfide-bonded: cysteine 729–cysteine 774 and cysteine 817–cysteine 876. A glycan (N-linked (GlcNAc...) asparagine) is linked at asparagine 886. Cystine bridges form between cysteine 916–cysteine 960 and cysteine 1005–cysteine 1067. 2 N-linked (GlcNAc...) asparagine glycosylation sites follow: asparagine 1104 and asparagine 1138. 2 cysteine pairs are disulfide-bonded: cysteine 1107–cysteine 1149 and cysteine 1193–cysteine 1241. Asparagine 1251 carries an N-linked (GlcNAc...) asparagine glycan. Ig-like C2-type domains lie at 1259 to 1341, 1350 to 1442, 1445 to 1528, and 1536 to 1631; these read EGVR…AALQ, VLSS…RLQV, ARVV…VMLR, and PTMM…FGVR. Intrachain disulfides connect cysteine 1281/cysteine 1324 and cysteine 1367/cysteine 1425. 2 N-linked (GlcNAc...) asparagine glycosylation sites follow: asparagine 1462 and asparagine 1476. 2 disulfide bridges follow: cysteine 1465–cysteine 1511 and cysteine 1554–cysteine 1613. The helical transmembrane segment at 1642-1662 threads the bilayer; the sequence is LLWVLGLLVGLLLLLLGLGAC. The Cytoplasmic portion of the chain corresponds to 1663 to 1709; it reads YTWRRRRVCKQSMGENSVEMAFQKETTQLIDPDAATCETSTCAPPLG.

It belongs to the immunoglobulin superfamily. SIGLEC (sialic acid binding Ig-like lectin) family. Interacts with TYROBP. Interacts with CLEC10A. As to expression, expressed by macrophages in various tissues. High levels are found in spleen, lymph node, perivascular macrophages in brain and lower levels in bone marrow, liver Kupffer cells and lamina propria of colon and lung. Also expressed by inflammatory macrophages in rheumatoid arthritis.

The protein localises to the cell membrane. It is found in the secreted. Macrophage-restricted adhesion molecule that mediates sialic-acid dependent binding to lymphocytes, including granulocytes, monocytes, natural killer cells, B-cells and CD8 T-cells. Plays a crucial role in limiting bacterial dissemination by engaging sialylated bacteria to promote effective phagocytosis and antigen presentation for the adaptive immune response. Mediates the uptake of various enveloped viruses via sialic acid recognition and subsequently induces the formation of intracellular compartments filled with virions (VCCs). In turn, enhances macrophage-to-T-cell transmission of several viruses including HIV-1 or SARS-CoV-2. Acts as an endocytic receptor mediating clathrin dependent endocytosis. Preferentially binds to alpha-2,3-linked sialic acid. Binds to SPN/CD43 on T-cells. May play a role in hemopoiesis. Plays a role in the inhibition of antiviral innate immune by promoting TBK1 degradation via TYROBP and TRIM27-mediated ubiquitination. Its function is as follows. (Microbial infection) Facilitates viral cytoplasmic entry into activated dendritic cells via recognition of sialylated gangliosides pesent on viral membrane. This chain is Sialoadhesin (SIGLEC1), found in Homo sapiens (Human).